We begin with the raw amino-acid sequence, 298 residues long: Protein ABIL1 (298 aa).

Belongs to the ABI family. In terms of assembly, binds SCAR2. In terms of tissue distribution, expressed in seedlings, roots, hypocotyls, cotyledons, leaves, stems, and flowers.

The protein localises to the cytoplasm. The protein resides in the cytoskeleton. Involved in regulation of actin and microtubule organization. Part of a WAVE complex that activates the Arp2/3 complex. The polypeptide is Protein ABIL1 (ABIL1) (Arabidopsis thaliana (Mouse-ear cress)).